The primary structure comprises 239 residues: Ribonuclease 3 (239 aa).

One can recognise an RNase III domain in the interval 12–137 (ISRLEALIGY…LIATLYLDGG (126 aa)). Glutamate 50 is a binding site for Mg(2+). Residue aspartate 54 is part of the active site. Positions 123 and 126 each coordinate Mg(2+). The active site involves glutamate 126. A DRBM domain is found at 162–231 (DAKTELQEWA…ATRLLEREGV (70 aa)).

The protein belongs to the ribonuclease III family. As to quaternary structure, homodimer. It depends on Mg(2+) as a cofactor.

The protein localises to the cytoplasm. It carries out the reaction Endonucleolytic cleavage to 5'-phosphomonoester.. In terms of biological role, digests double-stranded RNA. Involved in the processing of primary rRNA transcript to yield the immediate precursors to the large and small rRNAs (23S and 16S). Processes some mRNAs, and tRNAs when they are encoded in the rRNA operon. Processes pre-crRNA and tracrRNA of type II CRISPR loci if present in the organism. This is Ribonuclease 3 from Agrobacterium fabrum (strain C58 / ATCC 33970) (Agrobacterium tumefaciens (strain C58)).